Consider the following 266-residue polypeptide: Cell division protein FtsQ (266 aa).

Residues 1 to 31 (MRQKTSSNKKKQKNTNNISLRRKLGLMYKKA) are Cytoplasmic-facing. A helical transmembrane segment spans residues 32-52 (ILGLKIVLMIFVCLFVFTKYF). The Periplasmic portion of the chain corresponds to 53 to 266 (TSIKTYLITN…DRNKYYIQKY (214 aa)). One can recognise a POTRA domain in the interval 72–140 (FRLENVIIEG…NTVYIKLFER (69 aa)).

It belongs to the FtsQ/DivIB family. FtsQ subfamily.

It is found in the cell inner membrane. In terms of biological role, essential cell division protein. This Rickettsia typhi (strain ATCC VR-144 / Wilmington) protein is Cell division protein FtsQ.